The following is an 80-amino-acid chain: Myrmicitoxin(1)-Pr1a (80 aa).

A signal peptide spans 1–23 (MEIPKLLYIAVIAIGLSGSLTWA). The propeptide occupies 24–57 (TPLANPLAEAEAEAKATAEATAEALAEALAEPEP). Position 79 is a phenylalanine amide (Phe-79).

The protein belongs to the formicidae venom clade 1 family. As to expression, expressed by the venom gland.

It localises to the secreted. Vertebrate-selective toxin that causes pain by targeting voltage-gated sodium channels. The chain is Myrmicitoxin(1)-Pr1a from Pogonomyrmex rugosus (Desert harvester ant).